We begin with the raw amino-acid sequence, 322 residues long: Ribonuclease Z (322 aa).

Zn(2+) is bound by residues His-62, His-64, Asp-66, His-67, His-139, Asp-210, and His-268. Residue Asp-66 is the Proton acceptor of the active site.

It belongs to the RNase Z family. In terms of assembly, homodimer. Requires Zn(2+) as cofactor.

The catalysed reaction is Endonucleolytic cleavage of RNA, removing extra 3' nucleotides from tRNA precursor, generating 3' termini of tRNAs. A 3'-hydroxy group is left at the tRNA terminus and a 5'-phosphoryl group is left at the trailer molecule.. Its function is as follows. Zinc phosphodiesterase, which displays some tRNA 3'-processing endonuclease activity. Probably involved in tRNA maturation, by removing a 3'-trailer from precursor tRNA. The sequence is that of Ribonuclease Z from Nostoc sp. (strain PCC 7120 / SAG 25.82 / UTEX 2576).